The sequence spans 138 residues: Large ribosomal subunit protein bL19 (138 aa).

It belongs to the bacterial ribosomal protein bL19 family.

Its function is as follows. This protein is located at the 30S-50S ribosomal subunit interface and may play a role in the structure and function of the aminoacyl-tRNA binding site. The chain is Large ribosomal subunit protein bL19 from Rickettsia typhi (strain ATCC VR-144 / Wilmington).